Reading from the N-terminus, the 70-residue chain is U2-agatoxin-Ao1a (70 aa).

The first 20 residues, 1-20, serve as a signal peptide directing secretion; the sequence is MRAIISLFLISAMVFSMIQA. The propeptide occupies 21–34; it reads VPEEEGLQLSEDER. Cystine bridges form between Cys37-Cys53, Cys44-Cys58, and Cys52-Cys68. The residue at position 69 (Leu69) is a Leucine amide.

The protein belongs to the neurotoxin 01 (U2-agtx) family. In terms of tissue distribution, expressed by the venom gland.

The protein resides in the secreted. Insect active toxin causing rapid but reversible paralysis in crickets. No activity shown in mammals. Suppresses the excitatory postsynaptic potentials evoked in lobster neuromuscular synaptic preparations, possibly by blocking the presynaptic calcium channel. Induces instantaneous reversible paralysis when injected into crickets. Does not show effect on mammalian Cav2.1/CACNA1A, Cav2.2/CACNA1B and Cav2.3/CACNA1E. This chain is U2-agatoxin-Ao1a, found in Agelena orientalis (Funnel-web spider).